A 955-amino-acid chain; its full sequence is Histone deacetylase 6 (955 aa).

2 histone deacetylase regions span residues 15-337 (TLIG…YAPF) and 425-749 (METL…VLQN). The active-site 1 is the histidine 146. Catalysis depends on histidine 561, which acts as the 2. The segment at 815-840 (SIDMADQSSSSGSSSSSTRPSHNLEI) is disordered. Residues 818–831 (MADQSSSSGSSSSS) are compositionally biased toward low complexity. The UBP-type zinc finger occupies 853 to 951 (ATCPHLKEVK…SAAHESKFGE (99 aa)). Residues cysteine 855, histidine 857, cysteine 875, cysteine 878, cysteine 887, cysteine 890, and cysteine 895 each contribute to the Zn(2+) site. Residues 896–898 (GRF) are ubiquitin binding. Positions 902, 906, 912, 925, and 928 each coordinate Zn(2+). The ubiquitin binding stretch occupies residues 924 to 931 (WCYPCDSY).

It belongs to the histone deacetylase family. HD type 2 subfamily. Zn(2+) serves as cofactor.

The protein resides in the nucleus. The enzyme catalyses N(6)-acetyl-L-lysyl-[histone] + H2O = L-lysyl-[histone] + acetate. In terms of biological role, probable histone deacetylase. Histone deacetylases are responsible for the deacetylation of lysine residues on the N-terminal part of the core histones (H2A, H2B, H3 and H4). Histone deacetylation gives a tag for epigenetic repression and plays an important role in transcriptional regulation, cell cycle progression and developmental events. Histone deacetylases act via the formation of large multiprotein complexes. This is Histone deacetylase 6 (hda-6) from Caenorhabditis elegans.